A 596-amino-acid chain; its full sequence is Arrestin domain-containing protein C31A2.12 (596 aa).

The helical transmembrane segment at 194–211 (AYAIGSYIPIHFVLVPLL) threads the bilayer. Disordered regions lie at residues 363–387 (NLDT…TYAS) and 405–446 (QQQP…VITR). Residues Thr-373 and Thr-374 each carry the phosphothreonine modification. Composition is skewed to polar residues over residues 405 to 420 (QQQP…SPSN) and 430 to 446 (SLGS…VITR). 4 positions are modified to phosphoserine: Ser-452, Ser-474, Ser-493, and Ser-497. A disordered region spans residues 493–596 (SRPPSPGIVT…MLPSGFSRRN (104 aa)). Phosphothreonine is present on residues Thr-502 and Thr-507. The segment covering 504 to 522 (PQRTSPSFFVSPTESTRQS) has biased composition (polar residues). At Ser-514 the chain carries Phosphoserine. Residues 531-555 (HSTSSSSGISPSHSSASLAHLSQAS) are compositionally biased toward low complexity.

This sequence belongs to the arrestin family.

It localises to the membrane. This chain is Arrestin domain-containing protein C31A2.12, found in Schizosaccharomyces pombe (strain 972 / ATCC 24843) (Fission yeast).